Reading from the N-terminus, the 155-residue chain is Ribosome-binding factor A (155 aa).

2 stretches are compositionally biased toward basic and acidic residues: residues 116-125 (ARQRDQEVAR) and 142-155 (SPHEGRPESEADGW). The segment at 116-155 (ARQRDQEVARQAEGATPAGDANPYKTSPHEGRPESEADGW) is disordered.

It belongs to the RbfA family. As to quaternary structure, monomer. Binds 30S ribosomal subunits, but not 50S ribosomal subunits or 70S ribosomes.

The protein localises to the cytoplasm. Functionally, one of several proteins that assist in the late maturation steps of the functional core of the 30S ribosomal subunit. Associates with free 30S ribosomal subunits (but not with 30S subunits that are part of 70S ribosomes or polysomes). Required for efficient processing of 16S rRNA. May interact with the 5'-terminal helix region of 16S rRNA. The sequence is that of Ribosome-binding factor A from Corynebacterium kroppenstedtii (strain DSM 44385 / JCM 11950 / CIP 105744 / CCUG 35717).